We begin with the raw amino-acid sequence, 449 residues long: Serine--tRNA ligase (449 aa).

255–257 (TSE) is a binding site for L-serine. 286 to 288 (RSE) serves as a coordination point for ATP. Glu-309 lines the L-serine pocket. Position 373-376 (373-376 (EISS)) interacts with ATP. Position 409 (Ser-409) interacts with L-serine.

The protein belongs to the class-II aminoacyl-tRNA synthetase family. Type-1 seryl-tRNA synthetase subfamily. In terms of assembly, homodimer. The tRNA molecule binds across the dimer.

The protein localises to the cytoplasm. It carries out the reaction tRNA(Ser) + L-serine + ATP = L-seryl-tRNA(Ser) + AMP + diphosphate + H(+). It catalyses the reaction tRNA(Sec) + L-serine + ATP = L-seryl-tRNA(Sec) + AMP + diphosphate + H(+). It functions in the pathway aminoacyl-tRNA biosynthesis; selenocysteinyl-tRNA(Sec) biosynthesis; L-seryl-tRNA(Sec) from L-serine and tRNA(Sec): step 1/1. Its function is as follows. Catalyzes the attachment of serine to tRNA(Ser). Is also able to aminoacylate tRNA(Sec) with serine, to form the misacylated tRNA L-seryl-tRNA(Sec), which will be further converted into selenocysteinyl-tRNA(Sec). The polypeptide is Serine--tRNA ligase (Bordetella avium (strain 197N)).